The chain runs to 428 residues: C4-dicarboxylate transport protein (428 aa).

Helical transmembrane passes span 8 to 28, 44 to 64, 78 to 98, 148 to 168, 184 to 204, 222 to 242, 307 to 327, and 355 to 375; these read VLYV…HLYP, LIKM…IAGM, LLYF…ATHI, GEIL…AHLG, VLFG…FGAM, LIGT…GAIA, IYMT…LTWM, and AATL…ILGI.

This sequence belongs to the dicarboxylate/amino acid:cation symporter (DAACS) (TC 2.A.23) family.

The protein localises to the cell inner membrane. Functionally, responsible for the transport of dicarboxylates such as succinate, fumarate, and malate from the periplasm across the membrane. The polypeptide is C4-dicarboxylate transport protein (Burkholderia thailandensis (strain ATCC 700388 / DSM 13276 / CCUG 48851 / CIP 106301 / E264)).